The sequence spans 278 residues: S-formylglutathione hydrolase YeiG (278 aa).

Catalysis depends on charge relay system residues serine 145, aspartate 223, and histidine 256.

It belongs to the esterase D family.

It carries out the reaction S-formylglutathione + H2O = formate + glutathione + H(+). In terms of biological role, serine hydrolase involved in the detoxification of formaldehyde. Hydrolyzes S-formylglutathione to glutathione and formate. The sequence is that of S-formylglutathione hydrolase YeiG (yeiG) from Escherichia coli (strain SMS-3-5 / SECEC).